Reading from the N-terminus, the 106-residue chain is Large ribosomal subunit protein P1A (106 aa).

A disordered region spans residues 74–106 (AGGGAAAEEAAEEEKEEEAKEESDDDMGFGLFD). Acidic residues predominate over residues 82–100 (EAAEEEKEEEAKEESDDDM).

Belongs to the eukaryotic ribosomal protein P1/P2 family. In terms of assembly, component of the large ribosomal subunit (LSU). Mature ribosomes consist of a small (40S) and a large (60S) subunit. The 40S subunit contains about 32 different proteins and 1 molecule of RNA (18S). The 60S subunit contains 45 different proteins and 3 molecules of RNA (25S, 5.8S and 5S). The 5 acidic ribosomal P-proteins form the stalk structure of the 60S subunit. They are organized as a pentameric complex in which uL10/P0 interacts with 2 heterodimers, P1A-P2B and P1B-P2A. Post-translationally, phosphorylated.

Its subcellular location is the cytoplasm. In terms of biological role, component of the ribosome, a large ribonucleoprotein complex responsible for the synthesis of proteins in the cell. The small ribosomal subunit (SSU) binds messenger RNAs (mRNAs) and translates the encoded message by selecting cognate aminoacyl-transfer RNA (tRNA) molecules. The large subunit (LSU) contains the ribosomal catalytic site termed the peptidyl transferase center (PTC), which catalyzes the formation of peptide bonds, thereby polymerizing the amino acids delivered by tRNAs into a polypeptide chain. The nascent polypeptides leave the ribosome through a tunnel in the LSU and interact with protein factors that function in enzymatic processing, targeting, and the membrane insertion of nascent chains at the exit of the ribosomal tunnel. The polypeptide is Large ribosomal subunit protein P1A (RPP1A) (Candida albicans (strain SC5314 / ATCC MYA-2876) (Yeast)).